We begin with the raw amino-acid sequence, 217 residues long: 3-demethoxyubiquinol 3-hydroxylase (217 aa).

Fe cation is bound by residues glutamate 66, glutamate 96, histidine 99, glutamate 148, glutamate 180, and histidine 183.

Belongs to the COQ7 family. Fe cation serves as cofactor.

Its subcellular location is the cell membrane. The enzyme catalyses a 5-methoxy-2-methyl-3-(all-trans-polyprenyl)benzene-1,4-diol + AH2 + O2 = a 3-demethylubiquinol + A + H2O. It functions in the pathway cofactor biosynthesis; ubiquinone biosynthesis. Catalyzes the hydroxylation of 2-nonaprenyl-3-methyl-6-methoxy-1,4-benzoquinol during ubiquinone biosynthesis. The polypeptide is 3-demethoxyubiquinol 3-hydroxylase (Xanthomonas oryzae pv. oryzae (strain MAFF 311018)).